A 208-amino-acid polypeptide reads, in one-letter code: LexA repressor (208 aa).

Residues 28–48 (RAEIARELGFRSANAAEEHLK) constitute a DNA-binding region (H-T-H motif). Catalysis depends on for autocatalytic cleavage activity residues S125 and K162.

Belongs to the peptidase S24 family. As to quaternary structure, homodimer.

It catalyses the reaction Hydrolysis of Ala-|-Gly bond in repressor LexA.. In terms of biological role, represses a number of genes involved in the response to DNA damage (SOS response), including recA and lexA. In the presence of single-stranded DNA, RecA interacts with LexA causing an autocatalytic cleavage which disrupts the DNA-binding part of LexA, leading to derepression of the SOS regulon and eventually DNA repair. The protein is LexA repressor of Aliivibrio fischeri (strain MJ11) (Vibrio fischeri).